Reading from the N-terminus, the 412-residue chain is Branched-chain alpha-ketoacid dehydrogenase kinase (412 aa).

The N-terminal 30 residues, 1–30 (MILTSVLGSGPRSWSSLWPLLGSSLSLRAR), are a transit peptide targeting the mitochondrion. Position 31 is a phosphoserine (Ser-31). Residue Ser-52 is modified to Phosphoserine; by autocatalysis. Residues 159–404 (LDDHKDVVTL…DVYLRLRHID (246 aa)) form the Histidine kinase domain. Residues Lys-192 and Lys-233 each carry the N6-acetyllysine modification. ATP-binding residues include Asn-279 and Asp-315. Residue Asn-279 participates in Mg(2+) binding. K(+) contacts are provided by Val-328, Asp-330, and Phe-333. ATP contacts are provided by Thr-334 and Thr-335. A phosphoserine mark is found at Ser-356 and Ser-360. Residues His-364, Gly-367, and Leu-370 each coordinate ATP. Residue Gly-367 coordinates K(+).

It belongs to the PDK/BCKDK protein kinase family. As to quaternary structure, homodimer. Homotetramer. Dimerizes through interaction of two opposing nucleotide-binding domains. Interacts with E2 component of the branched-chain alpha-ketoacid dehydrogenase (BCKDH) complex. Competes with BCKDK for binding to the E2 component; this interaction is modulated by branched-chain alpha-keto acids. At steady state, BCKDH holoenzyme contains BCKDK and BCKDHA is phosphorylated. In response to high levels of branched-chain alpha-keto acids, the inhibitory BCKDK is replaced by activating PPM1K leading to BCKDHA dephosphorylation and BCAA degradation. In terms of processing, autophosphorylated. As to expression, ubiquitous.

The protein resides in the mitochondrion matrix. It is found in the mitochondrion. It catalyses the reaction L-seryl-[3-methyl-2-oxobutanoate dehydrogenase] + ATP = O-phospho-L-seryl-[3-methyl-2-oxobutanoate dehydrogenase] + ADP + H(+). The enzyme catalyses L-seryl-[protein] + ATP = O-phospho-L-seryl-[protein] + ADP + H(+). Serine/threonine-protein kinase component of macronutrients metabolism. Forms a functional kinase and phosphatase pair with PPM1K, serving as a metabolic regulatory node that coordinates branched-chain amino acids (BCAAs) with glucose and lipid metabolism via two distinct phosphoprotein targets: mitochondrial BCKDHA subunit of the branched-chain alpha-ketoacid dehydrogenase (BCKDH) complex and cytosolic ACLY, a lipogenic enzyme of Krebs cycle. Phosphorylates and inactivates mitochondrial BCKDH complex a multisubunit complex consisting of three multimeric components each involved in different steps of BCAA catabolism: E1 composed of BCKDHA and BCKDHB, E2 core composed of DBT monomers, and E3 composed of DLD monomers. Associates with the E2 component of BCKDH complex and phosphorylates BCKDHA on Ser-334, leading to conformational changes that interrupt substrate channeling between E1 and E2 and inactivates the BCKDH complex. Phosphorylates ACLY on Ser-455 in response to changes in cellular carbohydrate abundance such as occurs during fasting to feeding metabolic transition. Refeeding stimulates MLXIPL/ChREBP transcription factor, leading to increased BCKDK to PPM1K expression ratio, phosphorylation and activation of ACLY that ultimately results in the generation of malonyl-CoA and oxaloacetate immediate substrates of de novo lipogenesis and glucogenesis, respectively. Recognizes phosphosites having SxxE/D canonical motif. This chain is Branched-chain alpha-ketoacid dehydrogenase kinase (Bckdk), found in Mus musculus (Mouse).